Here is a 271-residue protein sequence, read N- to C-terminus: Ribosomal RNA small subunit methyltransferase J (271 aa).

S-adenosyl-L-methionine contacts are provided by residues 116-117, 132-133, 168-169, and Asp-190; these read RD, ER, and SS.

Belongs to the methyltransferase superfamily. RsmJ family.

The protein localises to the cytoplasm. It catalyses the reaction guanosine(1516) in 16S rRNA + S-adenosyl-L-methionine = N(2)-methylguanosine(1516) in 16S rRNA + S-adenosyl-L-homocysteine + H(+). In terms of biological role, specifically methylates the guanosine in position 1516 of 16S rRNA. The polypeptide is Ribosomal RNA small subunit methyltransferase J (Shewanella piezotolerans (strain WP3 / JCM 13877)).